The following is a 70-amino-acid chain: Melittin (70 aa).

Positions 1 to 21 (MKFLVNVALVFMVVYISFIYA) are cleaved as a signal peptide. Positions 22–43 (APEPEPAPEAEAEADAEADPEA) are cleaved as a propeptide — removed by a dipeptidylpeptidase. The residue at position 44 (Gly-44) is an N-formylglycine; partial. Glutamine amide is present on Gln-69.

It belongs to the melittin family. In terms of assembly, monomer (in solution and for integration into membranes), homotetramer (in solution and potentially as a toroidal pore in membranes), and potenially homomultimer (as a toroidal pore in membranes). As to expression, expressed by the venom gland.

It localises to the secreted. The protein resides in the target cell membrane. Its function is as follows. Main toxin of bee venom with strong hemolytic activity and antimicrobial activity. It has enhancing effects on bee venom phospholipase A2 activity. This amphipathic toxin binds to negatively charged membrane surface and forms pore by inserting into lipid bilayers inducing the leakage of ions and molecules and the enhancement of permeability that ultimately leads to cell lysis. It acts as a voltage-gated pore with higher selectivity for anions over cations. The ion conductance has been shown to be voltage-dependent. Self-association of melittin in membranes is promoted by high ionic strength, but not by the presence of negatively charged lipids. In vivo, intradermal injection into healthy human volunteers produce sharp pain sensation and an inflammatory response. It produces pain by activating primary nociceptor cells directly and indirectly due to its ability to activate plasma membrane phospholipase A2 and its pore-forming activity. This is Melittin (MELT) from Apis cerana cerana (Oriental honeybee).